Consider the following 122-residue polypeptide: Guanine nucleotide exchange factor MSS4 homolog (122 aa).

The MSS4 domain occupies 9-120 (EQITDGKNKS…YLALKRVVHK (112 aa)). Zn(2+) is bound by residues cysteine 22, cysteine 25, cysteine 92, and cysteine 95.

It belongs to the DSS4/MSS4 family. As to quaternary structure, interacts with Rab8.

The protein resides in the basal cell membrane. Its function is as follows. Guanine-nucleotide-releasing protein that acts on members of the sec4/ypt1/rab subfamily such as Rab8. During egg development, essential for establishing and maintaining epithelial cell polarity by regulating the correct polarized deposition of basal membrane (BM) proteins such as trol/Pcan and vkg/Coll IV to the basal surface of follicular epithelial (FE) cells. Likely to function by restricting the activity of the vesicle transport regulator Rab8 to the basal membrane, and thus directs BM protein-containing vesicles to the basal side of the FE cells. This function is independent of the Crag/Rab10 regulation of polarized BM protein secretion in the FE. In Drosophila melanogaster (Fruit fly), this protein is Guanine nucleotide exchange factor MSS4 homolog.